Consider the following 198-residue polypeptide: Holliday junction branch migration complex subunit RuvA (198 aa).

A domain I region spans residues methionine 1–glutamate 64. Residues serine 65 to glutamate 143 are domain II. A flexible linker region spans residues phenylalanine 144 to alanine 154. Residues alanine 154–glycine 198 are domain III.

Belongs to the RuvA family. As to quaternary structure, homotetramer. Forms an RuvA(8)-RuvB(12)-Holliday junction (HJ) complex. HJ DNA is sandwiched between 2 RuvA tetramers; dsDNA enters through RuvA and exits via RuvB. An RuvB hexamer assembles on each DNA strand where it exits the tetramer. Each RuvB hexamer is contacted by two RuvA subunits (via domain III) on 2 adjacent RuvB subunits; this complex drives branch migration. In the full resolvosome a probable DNA-RuvA(4)-RuvB(12)-RuvC(2) complex forms which resolves the HJ.

It is found in the cytoplasm. Functionally, the RuvA-RuvB-RuvC complex processes Holliday junction (HJ) DNA during genetic recombination and DNA repair, while the RuvA-RuvB complex plays an important role in the rescue of blocked DNA replication forks via replication fork reversal (RFR). RuvA specifically binds to HJ cruciform DNA, conferring on it an open structure. The RuvB hexamer acts as an ATP-dependent pump, pulling dsDNA into and through the RuvAB complex. HJ branch migration allows RuvC to scan DNA until it finds its consensus sequence, where it cleaves and resolves the cruciform DNA. The sequence is that of Holliday junction branch migration complex subunit RuvA from Clostridium botulinum (strain Alaska E43 / Type E3).